The sequence spans 448 residues: Methylenetetrahydrofolate--tRNA-(uracil-5-)-methyltransferase TrmFO (448 aa).

Position 10–15 (10–15) interacts with FAD; the sequence is GAGLAG.

Belongs to the MnmG family. TrmFO subfamily. It depends on FAD as a cofactor.

It localises to the cytoplasm. The enzyme catalyses uridine(54) in tRNA + (6R)-5,10-methylene-5,6,7,8-tetrahydrofolate + NADH + H(+) = 5-methyluridine(54) in tRNA + (6S)-5,6,7,8-tetrahydrofolate + NAD(+). It catalyses the reaction uridine(54) in tRNA + (6R)-5,10-methylene-5,6,7,8-tetrahydrofolate + NADPH + H(+) = 5-methyluridine(54) in tRNA + (6S)-5,6,7,8-tetrahydrofolate + NADP(+). Catalyzes the folate-dependent formation of 5-methyl-uridine at position 54 (M-5-U54) in all tRNAs. The protein is Methylenetetrahydrofolate--tRNA-(uracil-5-)-methyltransferase TrmFO of Lactococcus lactis subsp. cremoris (strain MG1363).